Here is a 694-residue protein sequence, read N- to C-terminus: Elongation factor G (694 aa).

Positions glutamate 8–threonine 287 constitute a tr-type G domain. Residues alanine 17–threonine 24, aspartate 86–histidine 90, and asparagine 140–aspartate 143 each bind GTP.

The protein belongs to the TRAFAC class translation factor GTPase superfamily. Classic translation factor GTPase family. EF-G/EF-2 subfamily.

Its subcellular location is the cytoplasm. In terms of biological role, catalyzes the GTP-dependent ribosomal translocation step during translation elongation. During this step, the ribosome changes from the pre-translocational (PRE) to the post-translocational (POST) state as the newly formed A-site-bound peptidyl-tRNA and P-site-bound deacylated tRNA move to the P and E sites, respectively. Catalyzes the coordinated movement of the two tRNA molecules, the mRNA and conformational changes in the ribosome. The chain is Elongation factor G from Brucella abortus (strain S19).